Here is a 519-residue protein sequence, read N- to C-terminus: MTKWSPNGNPLSTIYLILSLFTLAHTAPTTQHSRTTTQLRLEDEDGGGGVDEDSIHFVKGQMEKYGYLKGIDHSSPQEFRQALMFFQEVLEVEQTGNVDEMTVEAASKPRCTQTDVRQEQTKRTKRFTLSKRAKWAHASGQSVTLKWYISDYTSDIDRLETRKVVEKAFKLWSSQSYIKNEKKVTLTFQEASSKDEADINILWAEGNHGDEHDFDGANGKIEGNKKENVLAHTFFPGYARPLNGDIHFDDAEDWEIDVDQVGHGSNKRFFPYVLAHEIGHALGLDHSQKADALMHPYYKNVPINEIQLDIDDKCGVIWNYGGASDFCLYVWLMSQIVEAHNSSAQNNHGVGSITSSRTNKKSFKSEGFFLFQLKFPHSTLTHTDDVVMREKDKRSYRGDSKIPKCSSNNSSQRTLAEKKLTLGLHLSEADAKRYTEMVCNFLAGLHMWRTNPNHHASESLEKEYKGVSQEMGTFSGKSIAVRRLIRHAEHQKERSEKGPLDPDYFDDDFFENFFMEYSK.

The first 26 residues, 1-26 (MTKWSPNGNPLSTIYLILSLFTLAHT), serve as a signal peptide directing secretion. A propeptide spans 27–126 (APTTQHSRTT…RQEQTKRTKR (100 aa)) (activation peptide). Over residues 29–39 (TTQHSRTTTQL) the composition is skewed to polar residues. The disordered stretch occupies residues 29-50 (TTQHSRTTTQLRLEDEDGGGGV). A Cysteine switch motif is present at residues 109–116 (PRCTQTDV). Residues Cys-111, His-208, Asp-210, His-232, His-247, and His-276 each coordinate Zn(2+). Glu-277 is an active-site residue. Zn(2+) is bound by residues His-280 and His-286. Asn-341 carries an N-linked (GlcNAc...) asparagine glycan. Residues 391–402 (KDKRSYRGDSKI) show a composition bias toward basic and acidic residues. Positions 391-410 (KDKRSYRGDSKIPKCSSNNS) are disordered. Asn-408 carries an N-linked (GlcNAc...) asparagine glycan.

Belongs to the peptidase M10A family. It depends on Zn(2+) as a cofactor. Expressed in spermatheca and spermathecal-uterine valve, weakly in vulva and anal muscles and in two cells in the head (probably RMEV and RMED motor neurons).

It localises to the secreted. It is found in the extracellular space. Its subcellular location is the extracellular matrix. Its activity is regulated as follows. Inhibited by human TIMP1 and TIMP2 and the broad MMP inhibitors BB94 (Batimastat) and CT543. Functionally, metalloprotease involved in molting, a process during larval stages in which a new cuticle is formed and the old cuticle is shed. Plays a role in thermotolerance probably by preventing the accumulation of oxidized lipoproteins and cholesterol. The chain is Matrix metalloproteinase-B from Caenorhabditis elegans.